Consider the following 90-residue polypeptide: Probable Fe(2+)-trafficking protein (90 aa).

The protein belongs to the Fe(2+)-trafficking protein family.

Its function is as follows. Could be a mediator in iron transactions between iron acquisition and iron-requiring processes, such as synthesis and/or repair of Fe-S clusters in biosynthetic enzymes. The chain is Probable Fe(2+)-trafficking protein from Pseudoalteromonas translucida (strain TAC 125).